The sequence spans 505 residues: Calcium/calmodulin-dependent protein kinase kinase 1 (505 aa).

Residues 27 to 66 (HLEEAEEGPEPASNGVDPPPRARAASVIPGSASRPTPVRP) form a disordered region. Ser-67 and Ser-74 each carry phosphoserine. The residue at position 78 (Arg-78) is an Asymmetric dimethylarginine. At Ser-100 the chain carries Phosphoserine. Thr-108 is subject to Phosphothreonine. The Protein kinase domain maps to 128 to 409 (YKLQSEIGKG…VSDIKLHPWV (282 aa)). ATP contacts are provided by residues 134–142 (IGKGAYGVV) and Lys-157. An RP domain region spans residues 167–189 (QYGFPRRPPPRGSQAPQGGPAKQ). Asp-275 functions as the Proton acceptor in the catalytic mechanism. Residues 435–440 (KNSVKL) are autoinhibitory domain. The tract at residues 438-463 (VKLIPSWTTVILVKSMLRKRSFGNPF) is calmodulin-binding. Phosphoserine occurs at positions 458, 475, and 492. The interval 460–505 (GNPFEPQARREERSMSAPGNLLLKEGCGEGGKSPELPGVQEDEAAS) is disordered.

Belongs to the protein kinase superfamily. Ser/Thr protein kinase family. Interacts with CAMK4 and calmodulin. Appears to be autophosphorylated. Phosphorylated at multiple sites by PRCAKA/PKA. Phosphorylation of Ser-458 is blocked upon binding to Ca(2+)/calmodulin. May be phosphorylated by CAMK1 and CAMK4. As to expression, mostly expressed in the brain with higher levels in cortex and hippocampus. Lower expression levels were detected in striatum, nucleus accumbens and cerebellum (at protein level). Abundant in forebrain, weaker in cerebellum and also detected in thymus and spleen.

The protein localises to the cytoplasm. It is found in the nucleus. The catalysed reaction is L-seryl-[protein] + ATP = O-phospho-L-seryl-[protein] + ADP + H(+). It carries out the reaction L-threonyl-[protein] + ATP = O-phospho-L-threonyl-[protein] + ADP + H(+). With respect to regulation, activated by Ca(2+)/calmodulin. Binding of calmodulin may relieve intrasteric autoinhibition. Partially inhibited upon phosphorylation by PRCAKA/PKA. May be regulated through phosphorylation by CAMK1 and CAMK4. Functionally, calcium/calmodulin-dependent protein kinase that belongs to a proposed calcium-triggered signaling cascade involved in a number of cellular processes. Phosphorylates CAMK1, CAMK1D, CAMK1G and CAMK4. Involved in regulating cell apoptosis. Promotes cell survival by phosphorylating AKT1/PKB that inhibits pro-apoptotic BAD/Bcl2-antagonist of cell death. The protein is Calcium/calmodulin-dependent protein kinase kinase 1 (Camkk1) of Rattus norvegicus (Rat).